Consider the following 651-residue polypeptide: Probable potassium transport system protein Kup (651 aa).

12 consecutive transmembrane segments (helical) span residues 41 to 61 (LVLG…IYAF), 82 to 102 (VVSL…VLFV), 130 to 150 (LILG…VITP), 163 to 183 (IVAP…LVTL), 194 to 214 (VAIV…ASGL), 235 to 255 (FLTV…LAMT), 276 to 296 (WLWI…AFIL), 309 to 329 (MIPS…TVIA), 366 to 386 (IYIP…VLGF), 395 to 415 (AYGI…YIVM), 426 to 446 (ALPI…ANII), and 450 to 470 (EGGW…WTWV).

This sequence belongs to the HAK/KUP transporter (TC 2.A.72) family.

Its subcellular location is the cell inner membrane. The catalysed reaction is K(+)(in) + H(+)(in) = K(+)(out) + H(+)(out). Its function is as follows. Transport of potassium into the cell. Likely operates as a K(+):H(+) symporter. This Brucella canis (strain ATCC 23365 / NCTC 10854 / RM-666) protein is Probable potassium transport system protein Kup.